Consider the following 65-residue polypeptide: Large ribosomal subunit protein bL35 (65 aa).

Residues 1–28 (MPKLKTRKAAARRFKATGSGKIKRRKAF) are disordered.

It belongs to the bacterial ribosomal protein bL35 family.

This is Large ribosomal subunit protein bL35 from Trichodesmium erythraeum (strain IMS101).